A 576-amino-acid chain; its full sequence is Proline--tRNA ligase (576 aa).

This sequence belongs to the class-II aminoacyl-tRNA synthetase family. ProS type 1 subfamily. In terms of assembly, homodimer.

The protein resides in the cytoplasm. The catalysed reaction is tRNA(Pro) + L-proline + ATP = L-prolyl-tRNA(Pro) + AMP + diphosphate. In terms of biological role, catalyzes the attachment of proline to tRNA(Pro) in a two-step reaction: proline is first activated by ATP to form Pro-AMP and then transferred to the acceptor end of tRNA(Pro). As ProRS can inadvertently accommodate and process non-cognate amino acids such as alanine and cysteine, to avoid such errors it has two additional distinct editing activities against alanine. One activity is designated as 'pretransfer' editing and involves the tRNA(Pro)-independent hydrolysis of activated Ala-AMP. The other activity is designated 'posttransfer' editing and involves deacylation of mischarged Ala-tRNA(Pro). The misacylated Cys-tRNA(Pro) is not edited by ProRS. This chain is Proline--tRNA ligase, found in Trichlorobacter lovleyi (strain ATCC BAA-1151 / DSM 17278 / SZ) (Geobacter lovleyi).